Here is a 320-residue protein sequence, read N- to C-terminus: o-succinylbenzoate synthase (320 aa).

Lysine 133 serves as the catalytic Proton donor. Mg(2+) is bound by residues aspartate 161, glutamate 190, and aspartate 213. Residue lysine 235 is the Proton acceptor of the active site.

It belongs to the mandelate racemase/muconate lactonizing enzyme family. MenC type 1 subfamily. Requires a divalent metal cation as cofactor.

It carries out the reaction (1R,6R)-6-hydroxy-2-succinyl-cyclohexa-2,4-diene-1-carboxylate = 2-succinylbenzoate + H2O. Its pathway is quinol/quinone metabolism; 1,4-dihydroxy-2-naphthoate biosynthesis; 1,4-dihydroxy-2-naphthoate from chorismate: step 4/7. It participates in quinol/quinone metabolism; menaquinone biosynthesis. Functionally, converts 2-succinyl-6-hydroxy-2,4-cyclohexadiene-1-carboxylate (SHCHC) to 2-succinylbenzoate (OSB). The sequence is that of o-succinylbenzoate synthase from Salmonella enteritidis PT4 (strain P125109).